A 671-amino-acid chain; its full sequence is Bifunctional acetylxylan esterase/xylanase XynS20E (671 aa).

A signal peptide spans 1 to 19; the sequence is MRLGVALSTIAVLLTATSA. The segment at 54-279 is acetylxylan esterase; the sequence is QGAGRDIHVY…IQDIWDFVSQ (226 aa). Serine 152 acts as the Charge relay system in catalysis. N-linked (GlcNAc...) asparagine glycosylation occurs at asparagine 238. The disordered stretch occupies residues 285–328; it reads PVSASGNGGGNTTPTNPSTGGNGNGNGGGNTTPTNPSTGGNGNG. Residues 304-314 are compositionally biased toward gly residues; the sequence is GGNGNGNGGGN. 2 CBM10 domains span residues 335-374 and 383-422; these read KCSS…CGCG and TCSA…CGCG. N-linked (GlcNAc...) asparagine glycosylation is present at asparagine 339. 2 N-linked (GlcNAc...) asparagine glycosylation sites follow: asparagine 445 and asparagine 483. The GH11 domain occupies 461-661; sequence TVTSNKVGDI…NNGGTSGTAD (201 aa). The active-site Nucleophile is the glutamate 555. Residue glutamate 648 is the Proton donor of the active site.

In the N-terminal section; belongs to the axeA family. The protein in the C-terminal section; belongs to the glycosyl hydrolase 11 (cellulase G) family.

The protein resides in the secreted. The catalysed reaction is Deacetylation of xylans and xylo-oligosaccharides.. It catalyses the reaction Endohydrolysis of (1-&gt;4)-beta-D-xylosidic linkages in xylans.. It participates in glycan degradation; xylan degradation. Bifunctional acetylxylan esterase/xylanase involved in the hydrolysis of xylan, a major structural heterogeneous polysaccharide found in plant biomass representing the second most abundant polysaccharide in the biosphere, after cellulose. Degrades xylan from acetylxylan, beechwood, birchwood, and oat spelt, and releases acetate from 4-methylumbelliferyl acetate and beta-D-xylose tetraacetate. No activity is observed against carboxy methyl cellulose, beta-glucan, p-nitrophenol acetate, p-nitrophenol laurate, p-nitrophenol myristate, p-nitrophenol, palmitate, or beta-naphthol acetate. The polypeptide is Bifunctional acetylxylan esterase/xylanase XynS20E (xynS20E) (Neocallimastix patriciarum (Rumen fungus)).